The sequence spans 221 residues: RNA pyrophosphohydrolase (221 aa).

The Nudix hydrolase domain maps to 6–149 (GFRPNVGIVL…KRSVYALALT (144 aa)). Residues 38-59 (GGIDRGETPEQAMFRELHEEVG) carry the Nudix box motif.

This sequence belongs to the Nudix hydrolase family. RppH subfamily. Requires a divalent metal cation as cofactor.

In terms of biological role, accelerates the degradation of transcripts by removing pyrophosphate from the 5'-end of triphosphorylated RNA, leading to a more labile monophosphorylated state that can stimulate subsequent ribonuclease cleavage. This chain is RNA pyrophosphohydrolase, found in Verminephrobacter eiseniae (strain EF01-2).